The chain runs to 210 residues: MDQKSDSFLSVSSISFSYSSSTDKDFDLICMISPIVLLYITLLSIIFFVAALIHLLVKFLHRPQTRLDDAYDGITESSTALQGRYQTRFNLHDAEIDQSFIDALPLLHYKTMIGLRHDLSDCAVCLREFTAEDELRLLPKCSHAFHVECIDTWLLTNSTCPLCRDNLLLLGLTGTASSSTIVLVHESDGDNSQDSDSSFMLTDLDDVESK.

A helical transmembrane segment spans residues 35 to 55 (IVLLYITLLSIIFFVAALIHL). The RING-type; atypical zinc finger occupies 122–164 (CAVCLREFTAEDELRLLPKCSHAFHVECIDTWLLTNSTCPLCR). Residues 187 to 210 (SDGDNSQDSDSSFMLTDLDDVESK) are disordered.

The protein belongs to the RING-type zinc finger family. ATL subfamily.

The protein resides in the membrane. The enzyme catalyses S-ubiquitinyl-[E2 ubiquitin-conjugating enzyme]-L-cysteine + [acceptor protein]-L-lysine = [E2 ubiquitin-conjugating enzyme]-L-cysteine + N(6)-ubiquitinyl-[acceptor protein]-L-lysine.. The protein operates within protein modification; protein ubiquitination. The sequence is that of Putative RING-H2 finger protein ATL50 (ATL50) from Arabidopsis thaliana (Mouse-ear cress).